The primary structure comprises 152 residues: Nucleoside diphosphate kinase B (152 aa).

The tract at residues 1–66 (MAHQERTFIA…DRPFYPGLVK (66 aa)) is interaction with AKAP13. ATP-binding residues include K12, F60, R88, T94, R105, and N115. The Pros-phosphohistidine intermediate role is filled by H118.

The protein belongs to the NDK family. As to quaternary structure, hexamer of two different chains: An and B (A6, A5B, A4B2, A3B3, A2B4, AB5, B6). Interacts with CAPN8. Interacts with AKAP13. Interacts with ITGB1BP1 (via C-terminal domain region). Interacts with BCL2L10. Mg(2+) is required as a cofactor. Ubiquitous.

It is found in the cytoplasm. It localises to the cell projection. The protein resides in the lamellipodium. The protein localises to the ruffle. Its subcellular location is the nucleus. It carries out the reaction a 2'-deoxyribonucleoside 5'-diphosphate + ATP = a 2'-deoxyribonucleoside 5'-triphosphate + ADP. The catalysed reaction is a ribonucleoside 5'-diphosphate + ATP = a ribonucleoside 5'-triphosphate + ADP. It catalyses the reaction ATP + protein L-histidine = ADP + protein N-phospho-L-histidine.. Its function is as follows. Major role in the synthesis of nucleoside triphosphates other than ATP. The ATP gamma phosphate is transferred to the NDP beta phosphate via a ping-pong mechanism, using a phosphorylated active-site intermediate. Negatively regulates Rho activity by interacting with AKAP13/LBC. Acts as a transcriptional activator of the MYC gene; binds DNA non-specifically. Binds to both single-stranded guanine- and cytosine-rich strands within the nuclease hypersensitive element (NHE) III(1) region of the MYC gene promoter. Does not bind to duplex NHE III(1). Has G-quadruplex (G4) DNA-binding activity, which is independent of its nucleotide-binding and kinase activity. Binds both folded and unfolded G4 with similar low nanomolar affinities. Stabilizes folded G4s regardless of whether they are prefolded or not. Exhibits histidine protein kinase activity. This Canis lupus familiaris (Dog) protein is Nucleoside diphosphate kinase B (NME2).